Consider the following 286-residue polypeptide: NAD kinase (286 aa).

D74 serves as the catalytic Proton acceptor. NAD(+) is bound by residues 74–75 (DG), 148–149 (ND), D178, A186, 189–194 (TAYNLS), and Q244.

The protein belongs to the NAD kinase family. The cofactor is a divalent metal cation.

Its subcellular location is the cytoplasm. It carries out the reaction NAD(+) + ATP = ADP + NADP(+) + H(+). Involved in the regulation of the intracellular balance of NAD and NADP, and is a key enzyme in the biosynthesis of NADP. Catalyzes specifically the phosphorylation on 2'-hydroxyl of the adenosine moiety of NAD to yield NADP. This chain is NAD kinase, found in Campylobacter jejuni subsp. jejuni serotype O:2 (strain ATCC 700819 / NCTC 11168).